The sequence spans 700 residues: Elongation factor G (700 aa).

Residues 8–290 (ERYRNIGISA…AVVEYLPAPT (283 aa)) form the tr-type G domain. GTP-binding positions include 17–24 (AHIDAGKT), 88–92 (DTPGH), and 142–145 (NKMD).

The protein belongs to the TRAFAC class translation factor GTPase superfamily. Classic translation factor GTPase family. EF-G/EF-2 subfamily.

The protein resides in the cytoplasm. Functionally, catalyzes the GTP-dependent ribosomal translocation step during translation elongation. During this step, the ribosome changes from the pre-translocational (PRE) to the post-translocational (POST) state as the newly formed A-site-bound peptidyl-tRNA and P-site-bound deacylated tRNA move to the P and E sites, respectively. Catalyzes the coordinated movement of the two tRNA molecules, the mRNA and conformational changes in the ribosome. The sequence is that of Elongation factor G from Haemophilus influenzae (strain PittEE).